A 130-amino-acid chain; its full sequence is Sirohydrochlorin cobaltochelatase (130 aa).

H12 acts as the Proton acceptor in catalysis. H12 is a binding site for Co(2+). Ni(2+) is bound at residue H12. Residues E48 and 73–78 (LASGVH) contribute to the substrate site. H78 contacts Co(2+). H78 provides a ligand contact to Ni(2+).

This sequence belongs to the CbiX family. CbiXS subfamily. As to quaternary structure, homotetramer; dimer of dimers.

The catalysed reaction is Co-sirohydrochlorin + 2 H(+) = sirohydrochlorin + Co(2+). It carries out the reaction Ni-sirohydrochlorin + 2 H(+) = sirohydrochlorin + Ni(2+). It participates in cofactor biosynthesis; adenosylcobalamin biosynthesis; cob(II)yrinate a,c-diamide from sirohydrochlorin (anaerobic route): step 1/10. Its function is as follows. Catalyzes the insertion of Co(2+) into sirohydrochlorin as part of the anaerobic pathway to cobalamin biosynthesis. Involved in the biosynthesis of the unique nickel-containing tetrapyrrole coenzyme F430, the prosthetic group of methyl-coenzyme M reductase (MCR), which plays a key role in methanogenesis and anaerobic methane oxidation. Catalyzes the insertion of Ni(2+) into sirohydrochlorin to yield Ni-sirohydrochlorin. In Methanosarcina barkeri (strain Fusaro / DSM 804), this protein is Sirohydrochlorin cobaltochelatase.